The primary structure comprises 54 residues: Ovomucoid (54 aa).

The 51-residue stretch at valine 4–cysteine 54 folds into the Kazal-like domain. Intrachain disulfides connect cysteine 6–cysteine 36, cysteine 14–cysteine 33, and cysteine 22–cysteine 54. Asparagine 43 carries N-linked (GlcNAc...) asparagine glycosylation.

It localises to the secreted. This is Ovomucoid from Chroicocephalus ridibundus (Black-headed gull).